The following is a 502-amino-acid chain: Cysteine--tRNA ligase (502 aa).

C30 is a Zn(2+) binding site. Positions 32-42 (PTIYDYAHIGN) match the 'HIGH' region motif. Residues C224, H263, and E267 each contribute to the Zn(2+) site. Positions 296-300 (KMSKS) match the 'KMSKS' region motif. ATP is bound at residue K299.

The protein belongs to the class-I aminoacyl-tRNA synthetase family. In terms of assembly, monomer. Requires Zn(2+) as cofactor.

The protein localises to the cytoplasm. The enzyme catalyses tRNA(Cys) + L-cysteine + ATP = L-cysteinyl-tRNA(Cys) + AMP + diphosphate. This Bartonella quintana (strain Toulouse) (Rochalimaea quintana) protein is Cysteine--tRNA ligase.